Reading from the N-terminus, the 635-residue chain is Transaminated amino acid decarboxylase (635 aa).

A Glycyl lysine isopeptide (Lys-Gly) (interchain with G-Cter in ubiquitin) cross-link involves residue lysine 588.

The protein belongs to the TPP enzyme family. Requires Mg(2+) as cofactor. Thiamine diphosphate is required as a cofactor.

The protein resides in the cytoplasm. The catalysed reaction is 4-methyl-2-oxopentanoate + H(+) = 3-methylbutanal + CO2. It catalyses the reaction (S)-3-methyl-2-oxopentanoate + H(+) = 2-methylbutanal + CO2. The enzyme catalyses indole-3-pyruvate + H(+) = indole-3-acetaldehyde + CO2. It carries out the reaction 3-phenylpyruvate + H(+) = 2-phenylacetaldehyde + CO2. The catalysed reaction is 4-methylsulfanyl-2-oxobutanoate + H(+) = 3-methylsulfanylpropanal + CO2. It catalyses the reaction 3-(4-hydroxyphenyl)pyruvate + H(+) = (4-hydroxyphenyl)acetaldehyde + CO2. Its pathway is amino-acid degradation; Ehrlich pathway. Its function is as follows. One of five 2-oxo acid decarboxylases (PDC1, PDC5, PDC6, ARO10, and THI3) involved in amino acid catabolism. The enzyme catalyzes the decarboxylation of amino acids, which, in a first step, have been transaminated to the corresponding 2-oxo acids (alpha-keto-acids). In a third step, the resulting aldehydes are reduced to alcohols, collectively referred to as fusel oils or alcohols. Its preferred substrates are the transaminated amino acids derived from phenylalanine (phenylpyruvate), tryptophan (3-(indol-3-yl)pyruvate), and probably tyrosine (4-hydroxyphenylpyruvate), but also isoleucine ((3S)-3-methyl-2-oxopentanoate, also alpha-keto-beta-methylvalerate) and methionine (4-methylthio-2-oxobutanoate), whereas transaminated leucine (4-methyl-2-oxopentanoate, also alpha-keto-isocaproate) is a low efficiency substrate and transaminated valine and pyruvate are no substrates. In analogy to the pyruvate decarboxylases the enzyme may in a side-reaction catalyze condensation (or carboligation) reactions leading to the formation of 2-hydroxy ketone, collectively called acyloins. In Saccharomyces cerevisiae (strain ATCC 204508 / S288c) (Baker's yeast), this protein is Transaminated amino acid decarboxylase (ARO10).